A 102-amino-acid polypeptide reads, in one-letter code: Small ribosomal subunit protein uS10 (102 aa).

Belongs to the universal ribosomal protein uS10 family. Part of the 30S ribosomal subunit.

Functionally, involved in the binding of tRNA to the ribosomes. This Frankia alni (strain DSM 45986 / CECT 9034 / ACN14a) protein is Small ribosomal subunit protein uS10.